We begin with the raw amino-acid sequence, 183 residues long: uncharacterized protein (183 aa).

The segment at 136–183 (EPPASVPSKQSGRSDKKKSTRKSPTFRNRPDFRKNKGRQLNKTTKQKK) is disordered. Positions 170–183 (NKGRQLNKTTKQKK) are enriched in basic residues.

This is an uncharacterized protein from Homo sapiens (Human).